Consider the following 333-residue polypeptide: Glyceraldehyde-3-phosphate dehydrogenase (333 aa).

S1 is modified (N-acetylserine). NAD(+)-binding positions include 10 to 11, D31, and M76; that span reads RI. D-glyceraldehyde 3-phosphate-binding positions include 147 to 149, T178, 207 to 208, and R230; these read SCT and TG. C148 (nucleophile) is an active-site residue. N312 serves as a coordination point for NAD(+).

It belongs to the glyceraldehyde-3-phosphate dehydrogenase family. Homotetramer.

It localises to the cytoplasm. The enzyme catalyses D-glyceraldehyde 3-phosphate + phosphate + NAD(+) = (2R)-3-phospho-glyceroyl phosphate + NADH + H(+). The protein operates within carbohydrate degradation; glycolysis; pyruvate from D-glyceraldehyde 3-phosphate: step 1/5. The protein is Glyceraldehyde-3-phosphate dehydrogenase of Panulirus versicolor (Painted spiny lobster).